A 543-amino-acid chain; its full sequence is Bifunctional purine biosynthesis protein PurH (543 aa).

Residues 5-151 form the MGS-like domain; the sequence is NHARPIRRAL…KNHKDVTIVV (147 aa).

The protein belongs to the PurH family.

It carries out the reaction (6R)-10-formyltetrahydrofolate + 5-amino-1-(5-phospho-beta-D-ribosyl)imidazole-4-carboxamide = 5-formamido-1-(5-phospho-D-ribosyl)imidazole-4-carboxamide + (6S)-5,6,7,8-tetrahydrofolate. The enzyme catalyses IMP + H2O = 5-formamido-1-(5-phospho-D-ribosyl)imidazole-4-carboxamide. It participates in purine metabolism; IMP biosynthesis via de novo pathway; 5-formamido-1-(5-phospho-D-ribosyl)imidazole-4-carboxamide from 5-amino-1-(5-phospho-D-ribosyl)imidazole-4-carboxamide (10-formyl THF route): step 1/1. It functions in the pathway purine metabolism; IMP biosynthesis via de novo pathway; IMP from 5-formamido-1-(5-phospho-D-ribosyl)imidazole-4-carboxamide: step 1/1. The protein is Bifunctional purine biosynthesis protein PurH of Shewanella oneidensis (strain ATCC 700550 / JCM 31522 / CIP 106686 / LMG 19005 / NCIMB 14063 / MR-1).